A 375-amino-acid polypeptide reads, in one-letter code: Pectate lyase C (375 aa).

Residues 1-22 (MKSLITPITAGLLLALSQPLLA) form the signal peptide. Cys94 and Cys177 are joined by a disulfide. Positions 151, 153, 188, and 192 each coordinate Ca(2+). Arg240 is a catalytic residue. Cys351 and Cys374 are joined by a disulfide.

This sequence belongs to the polysaccharide lyase 1 family. PLADES subfamily. Ca(2+) serves as cofactor.

It is found in the secreted. It catalyses the reaction Eliminative cleavage of (1-&gt;4)-alpha-D-galacturonan to give oligosaccharides with 4-deoxy-alpha-D-galact-4-enuronosyl groups at their non-reducing ends.. Its pathway is glycan metabolism; pectin degradation; 2-dehydro-3-deoxy-D-gluconate from pectin: step 2/5. Functionally, involved in maceration and soft-rotting of plant tissue. This chain is Pectate lyase C, found in Dickeya chrysanthemi (Pectobacterium chrysanthemi).